We begin with the raw amino-acid sequence, 276 residues long: MCIIFFKFDPRPVSKNAYRLILAANRDEFYSRPSKLADFWGNNNEILSGLDMEEGKEGGTWLGISTRGKLAALTNYLQPQLDWQARGRGELVTHFLTTDVDSLSYLKKVSMEGHLYNGFNLIAADLSTAKGDVICYYGNRGEPDPIVLTPGTYGLSNALLETPWRKLCFGKQLFLEAVERSQALPKDVLIASLLDVLNNEEAQLPDPAIEDQGGEYVQPMLSKYAAVCVRCPGYGTRTNTIILVDADGHVTFTERSMMDKDLSHWETRTYEFTLQS.

The protein belongs to the Tango2 family.

It localises to the cytoplasm. The protein localises to the mitochondrion. Its subcellular location is the golgi apparatus. Its function is as follows. May be involved in lipid homeostasis. The polypeptide is Transport and Golgi organization protein 2 homolog (TANGO2) (Homo sapiens (Human)).